The sequence spans 465 residues: 3-isopropylmalate dehydratase large subunit (465 aa).

Positions 347, 407, and 410 each coordinate [4Fe-4S] cluster.

It belongs to the aconitase/IPM isomerase family. LeuC type 1 subfamily. As to quaternary structure, heterodimer of LeuC and LeuD. Requires [4Fe-4S] cluster as cofactor.

It carries out the reaction (2R,3S)-3-isopropylmalate = (2S)-2-isopropylmalate. It functions in the pathway amino-acid biosynthesis; L-leucine biosynthesis; L-leucine from 3-methyl-2-oxobutanoate: step 2/4. Its function is as follows. Catalyzes the isomerization between 2-isopropylmalate and 3-isopropylmalate, via the formation of 2-isopropylmaleate. The polypeptide is 3-isopropylmalate dehydratase large subunit (Tolumonas auensis (strain DSM 9187 / NBRC 110442 / TA 4)).